Consider the following 1163-residue polypeptide: DNA-directed RNA polymerase subunit beta' (1163 aa).

Positions 59, 61, 74, and 77 each coordinate Zn(2+). The Mg(2+) site is built by Asp-449, Asp-451, and Asp-453. 4 residues coordinate Zn(2+): Cys-794, Cys-868, Cys-875, and Cys-878.

It belongs to the RNA polymerase beta' chain family. In terms of assembly, the RNAP catalytic core consists of 2 alpha, 1 beta, 1 beta' and 1 omega subunit. When a sigma factor is associated with the core the holoenzyme is formed, which can initiate transcription. Requires Mg(2+) as cofactor. The cofactor is Zn(2+).

The enzyme catalyses RNA(n) + a ribonucleoside 5'-triphosphate = RNA(n+1) + diphosphate. Its function is as follows. DNA-dependent RNA polymerase catalyzes the transcription of DNA into RNA using the four ribonucleoside triphosphates as substrates. This chain is DNA-directed RNA polymerase subunit beta', found in Caldicellulosiruptor saccharolyticus (strain ATCC 43494 / DSM 8903 / Tp8T 6331).